The primary structure comprises 944 residues: E3 ubiquitin-protein ligase HACE1 (944 aa).

7 ANK repeats span residues 23-55 (LPED…NSKF), 64-93 (VKRS…DPNY), 97-126 (SGCT…DVNI), 130-159 (EGLT…NVDV), 163-192 (MGQT…DINR), 196-226 (SGAT…YLPD), and 228-253 (NGVT…QHHP). Residues 609–944 (NCEKLKQGIA…HCGSYGYTMA (336 aa)) form the HECT domain. Cys-911 serves as the catalytic Glycyl thioester intermediate.

The protein resides in the golgi apparatus. The protein localises to the golgi stack membrane. It localises to the cytoplasm. It is found in the endoplasmic reticulum. The enzyme catalyses S-ubiquitinyl-[E2 ubiquitin-conjugating enzyme]-L-cysteine + [acceptor protein]-L-lysine = [E2 ubiquitin-conjugating enzyme]-L-cysteine + N(6)-ubiquitinyl-[acceptor protein]-L-lysine.. It functions in the pathway protein modification; protein ubiquitination. E3 ubiquitin-protein ligase involved in Golgi membrane fusion and regulation of small GTPases. Acts as a regulator of Golgi membrane dynamics during the cell cycle: recruited to Golgi membrane by Rab proteins and regulates postmitotic Golgi membrane fusion. Acts by mediating ubiquitination during mitotic Golgi disassembly, ubiquitination serving as a signal for Golgi reassembly later, after cell division. This Xenopus laevis (African clawed frog) protein is E3 ubiquitin-protein ligase HACE1 (hace1).